The following is a 237-amino-acid chain: Probable transcriptional regulatory protein Bpro_2928 (237 aa).

It belongs to the TACO1 family.

It localises to the cytoplasm. This Polaromonas sp. (strain JS666 / ATCC BAA-500) protein is Probable transcriptional regulatory protein Bpro_2928.